The chain runs to 332 residues: Junctional sarcoplasmic reticulum protein 1 (332 aa).

The interval 1 to 80 is mediates interaction with CACNA1S; it reads MTTRGLEDLD…EKELAGKEST (80 aa). Disordered regions lie at residues 1 to 125 and 159 to 332; these read MTTR…PWGD and APHP…KGRD. Thr-51 is subject to Phosphothreonine. Residues 66-76 are compositionally biased toward basic and acidic residues; sequence GLKKMEKELAG. Pro residues-rich tracts occupy residues 98 to 116 and 177 to 197; these read QAPP…PPRT and APKP…PGPP. A compositionally biased stretch (low complexity) spans 221–232; sequence GGSISEASGEES. A phosphoserine mark is found at Ser-223 and Ser-228. 2 stretches are compositionally biased toward basic and acidic residues: residues 239–256 and 283–307; these read GSQE…EKLK and RRWE…EHGK.

As to quaternary structure, interacts with CACNA1S, CACNB1 and calsequestrin. In terms of tissue distribution, specifically expressed in skeletal muscle. Detected in skeletal muscle and tongue (at protein level).

The protein localises to the sarcoplasmic reticulum membrane. The protein resides in the endoplasmic reticulum membrane. Its function is as follows. Involved in skeletal muscle excitation/contraction coupling (EC), probably acting as a regulator of the voltage-sensitive calcium channel CACNA1S. EC is a physiological process whereby an electrical signal (depolarization of the plasma membrane) is converted into a chemical signal, a calcium gradient, by the opening of ryanodine receptor calcium release channels. May regulate CACNA1S membrane targeting and activity. This is Junctional sarcoplasmic reticulum protein 1 (Jsrp1) from Mus musculus (Mouse).